Consider the following 198-residue polypeptide: Protein ORFi in retron Ec67 (198 aa).

This sequence belongs to the CI repressor protein family.

The chain is Protein ORFi in retron Ec67 from Escherichia coli.